The primary structure comprises 102 residues: uncharacterized protein (102 aa).

Positions 1 to 22 are cleaved as a signal peptide; that stretch reads MKFKYGATLFSGFLGLSAILAA. A lipid anchor (N-palmitoyl cysteine) is attached at Cys-23. Residue Cys-23 is the site of S-diacylglycerol cysteine attachment.

Belongs to the MG185/MG260 family.

It localises to the cell membrane. This is an uncharacterized protein from Mycoplasma pneumoniae (strain ATCC 29342 / M129 / Subtype 1) (Mycoplasmoides pneumoniae).